Here is a 214-residue protein sequence, read N- to C-terminus: Adenylate kinase (214 aa).

10 to 15 (GSGKGT) lines the ATP pocket. An NMP region spans residues 30–59 (STGDMLRAAVREGTPLGMEAKKIMDAGQLV). Residues T31, R36, 57-59 (QLV), 85-88 (GFPR), and Q92 contribute to the AMP site. The interval 122–159 (GRRVHPASGRTYHVVFNPPKVEGRDDETGEPLVQREDD) is LID. Residues R123 and 132-133 (TY) each bind ATP. Residues R156 and R167 each coordinate AMP. An ATP-binding site is contributed by G200.

The protein belongs to the adenylate kinase family. Monomer.

The protein resides in the cytoplasm. It catalyses the reaction AMP + ATP = 2 ADP. It functions in the pathway purine metabolism; AMP biosynthesis via salvage pathway; AMP from ADP: step 1/1. Catalyzes the reversible transfer of the terminal phosphate group between ATP and AMP. Plays an important role in cellular energy homeostasis and in adenine nucleotide metabolism. In Methylococcus capsulatus (strain ATCC 33009 / NCIMB 11132 / Bath), this protein is Adenylate kinase.